Consider the following 232-residue polypeptide: tRNA (guanine-N(1)-)-methyltransferase (232 aa).

S-adenosyl-L-methionine-binding positions include glycine 112 and 132–137 (IGDYVL).

Belongs to the RNA methyltransferase TrmD family. As to quaternary structure, homodimer.

It is found in the cytoplasm. It catalyses the reaction guanosine(37) in tRNA + S-adenosyl-L-methionine = N(1)-methylguanosine(37) in tRNA + S-adenosyl-L-homocysteine + H(+). Specifically methylates guanosine-37 in various tRNAs. In Anaplasma phagocytophilum (strain HZ), this protein is tRNA (guanine-N(1)-)-methyltransferase.